A 953-amino-acid chain; its full sequence is Coatomer subunit beta (953 aa).

Residue Thr-2 is modified to N-acetylthreonine. 6 HEAT repeats span residues His-96–Glu-131, Leu-132–His-168, Ser-240–Thr-276, Ala-277–His-314, Arg-316–Val-353, and Asp-396–Asn-433. Lys-494 bears the N6-acetyllysine mark.

In terms of assembly, oligomeric complex that consists of at least the alpha, beta, beta', gamma, delta, epsilon and zeta subunits. Interacts with SCYL1. Interacts with COPG1. Interacts (via trunk domain) with ARF1 (via switch I region); the interaction is direct. Interacts with KCNK2/TREK (via N-terminus); this interaction increases the channel-mediated whole cell currents and promotes plasma membrane expression of KCNK2/TREK. Interacts with anthrax lethal factor (LF); this interaction may facilitate endosomal vesicle membrane translocation of LF and its release from the lumen of endosomal vesicles to external milieu. Interacts with CAPN8 and PRKCE. Interacts with ARF1 (myristoylated); this interaction is required for binding of COPB1 to Golgi membranes. Interacts with STX17. Interacts with TMEM115. Interacts with HLA-G-B2M complex; this interaction mediates the endoplasmic reticulum (ER) retrieval of HLA-E-B2M complexes that bind low affinity peptides. Interacts with TMEM41B. As to quaternary structure, (Microbial infection) Interacts (via C-terminus) with HIV-1 Nef; the interaction is direct. In terms of processing, proteolytically cleaved between Ser-528 and Ser-529 by CAPN8.

Its subcellular location is the cytoplasm. The protein resides in the golgi apparatus membrane. The protein localises to the cytoplasmic vesicle. It is found in the COPI-coated vesicle membrane. It localises to the cell membrane. Its subcellular location is the endoplasmic reticulum-Golgi intermediate compartment. The coatomer is a cytosolic protein complex that binds to dilysine motifs and reversibly associates with Golgi non-clathrin-coated vesicles, which further mediate biosynthetic protein transport from the ER, via the Golgi up to the trans Golgi network. Coatomer complex is required for budding from Golgi membranes, and is essential for the retrograde Golgi-to-ER transport of dilysine-tagged proteins. In mammals, the coatomer can only be recruited by membranes associated to ADP-ribosylation factors (ARFs), which are small GTP-binding proteins; the complex also influences the Golgi structural integrity, as well as the processing, activity, and endocytic recycling of LDL receptors. Plays a functional role in facilitating the transport of kappa-type opioid receptor mRNAs into axons and enhances translation of these proteins. Required for limiting lipid storage in lipid droplets. Involved in lipid homeostasis by regulating the presence of perilipin family members PLIN2 and PLIN3 at the lipid droplet surface and promoting the association of adipocyte surface triglyceride lipase (PNPLA2) with the lipid droplet to mediate lipolysis. Involved in the Golgi disassembly and reassembly processes during cell cycle. Involved in autophagy by playing a role in early endosome function. Plays a role in organellar compartmentalization of secretory compartments including endoplasmic reticulum (ER)-Golgi intermediate compartment (ERGIC), Golgi, trans-Golgi network (TGN) and recycling endosomes, and in biosynthetic transport of CAV1. Promotes degradation of Nef cellular targets CD4 and MHC class I antigens by facilitating their trafficking to degradative compartments. In Homo sapiens (Human), this protein is Coatomer subunit beta.